A 1582-amino-acid chain; its full sequence is MSIPAMPFITGPVAEPQEQLRLSPPRGRLSAIIPLSKVQEVLWVDYLRQPWATHYNLTLKVDLTGSNLSLESIMNNIHKLGSRHDMLRTTFHIDSSAQHTSQSYMAVHDAASSFQNIAIVSDDARLQQALRRGLDLSTEFPVQWIVHQAYSVVDGRLVAAHTVYAMGHHIAVDGTSMSHLSRELVQLIQDGDTTTPPPPPPPSYGEFVQRQAAYLRSPEAQDAEAFWLAQIAHTTPHRWTHAAPLPASAPGHDYRKMDTWAFFPSDELAAWSQLYRTSWFRVAVSVIGLVTAGHARPAPHHDSTLQVAFGARAPSFAGCVSHMANTMPIRQPVSSLLRRSGSATFAELVQLVGKNISQAKKNEMYPFLSLVEAAARDGEDTAAASRVAVTLSPRLADDRCTLYPVNGVWDLFFCFLEHADGGVALGVISDPAVFGPAALAALRADVLRTVALSQQTPDFPLTSALSCLADRQVATLAGGPDVEDVDAVIAARVVSDWIRSRAATQPDEIALSNGEDGTSLTYGALDASSDRKAVHLQRLGAGRNDVVVLQLGAVFDMVAWILAVHKAGACFVVLDRQLPLARKQAILRVADAKLFVSDAFDDAYFADCATPPTTVSVWADTAVPADAHLAPVSGAAPTDLAYLVFTSGSTGLPKAIEVEHQNLSSYVSATRAVVPVGRGSRVLQFAPFAFDASVLEWAVTLSYGGTLCFVQHPALLVGDYLADMVDLNQINFFHTTPSVLATIPDGRRLPSLRALSVGGEASSAGLLDKWSRRLHLIHAYGPTETTVICATEHILPASDTLPSPSNIGRANPHVALLICPEDAETVLGPGVTGEICIAGPQVTRGYRGQPALTAAQFRTMEHNGRVTRMYRSGDRGFIGDDGKLHILGRMNNREIKLRGFRMDLAAIEKSILDNCPEVMTASVQVVDDKLVAFACPATLQGDAIRQRIALDLPSYSVPADITAVDSLPLNTNGKVDHKEVLQQFGASTGPAAAIKPVIVTKTAPKKKELQTSDSNLVDRLEASITTLWQKVLGCRDAPGPDVTFYNAGGHSILLSALHKELVTLYPAAKISLLDVFYNPTIRRQAQRLSELVGDDGFIPSSSVSDVSAQDVATPGNSTTATSVAADAPLFAIVGMAGRFPGADSVEAMWELLMAQRDGITTSDGAGAESADLAEGEVFVPRYGSINGLEDFRASDWNMSDEDAQVLDPQKRMFLMIAEEALQDASIPVRTVSGSNIGTFVGIAPNTYLSSALPSSVSSSAFERRYKAVLDPTASTLTAYKLNLLGPSMDVSAACASSLVAVHQALRALRAGDCAAALVGGVSLAYPQLGGYATSDGKIFSARGQCRPLDAAADGSVPADGVAAVVLKPLVAAQTDGDRVYAVIQGHAIGTDGAVDKIGFTVPSSSGQAKVISAAMADARLARHQGVRYVEMHGSGTSIGDALEYKGIERAVAAYEATGGESRCSSGAISPTGTEQQPSDTKQTPRTLFVGSNKGNFGNAEAASGLFSLIKASLAVSRGVVPPLRQLGDCNELMGVAEGSTVQPLRKQLRLEKGDRVGVTALGYGGVNAHCILASLEAVEERE.

Residues 33–387 form a condensation (C) domain region; sequence IPLSKVQEVL…GEDTAAASRV (355 aa). Residues 499–892 are adenylation (A) domain; sequence RSRAATQPDE…KLHILGRMNN (394 aa). One can recognise a Carrier domain in the interval 1015-1092; it reads NLVDRLEASI…RQAQRLSELV (78 aa). The Ketosynthase family 3 (KS3) domain occupies 1127 to 1574; that stretch reads APLFAIVGMA…GVNAHCILAS (448 aa). Residues Cys-1294 and His-1432 each act as for beta-ketoacyl synthase activity in the active site. A disordered region spans residues 1460–1485; sequence ESRCSSGAISPTGTEQQPSDTKQTPR. A compositionally biased stretch (polar residues) spans 1462–1485; sequence RCSSGAISPTGTEQQPSDTKQTPR. Asn-1498 serves as the catalytic For beta-ketoacyl synthase activity.

This sequence in the N-terminal section; belongs to the NRP synthetase family. Requires pantetheine 4'-phosphate as cofactor.

It catalyses the reaction acetoacetyl-CoA + L-isoleucine + ATP = tenuazonic acid + AMP + diphosphate + CoA + 2 H(+). Functionally, hybrid PKS-NRPS synthetase that mediates the biosynthesis of the toxin tenuazonic acid (TeA), an inhibitor of protein biosynthesis on ribosomes by suppressing the release of new protein. TAS1 alone is sufficient for TeA synthesis via the condensation of isoleucine (Ile) with acetoacetyl-CoA by the N-terminal NRPS module and subsequent cyclization conducted by the C-terminal KS domain. This Cordyceps militaris (strain CM01) (Caterpillar fungus) protein is Hybrid PKS-NRPS synthetase TAS1.